Consider the following 535-residue polypeptide: Sodium channel protein Nach (535 aa).

Residues 1-49 (MGHQEELKPEQVDLKVTPFVGYLRRTWSDFCATSSIHGLKYTRDEDTNK) are Cytoplasmic-facing. Residues 50-70 (IVHLVWLLISVVMFICAVVMA) form a helical membrane-spanning segment. Residues 71-471 (RTFYMDYRSS…LVSNLGSAFS (401 aa)) are Extracellular-facing. N-linked (GlcNAc...) asparagine glycosylation is found at N165, N239, and N367. The chain crosses the membrane as a helical span at residues 472-492 (LFVGMSMLSVVEIIYYFSVIL). Topologically, residues 493–535 (RKNYKLECETRSQMLHKKPKFAWPKANDTHSKEQKSVFIIHKS) are cytoplasmic.

This sequence belongs to the amiloride-sensitive sodium channel (TC 1.A.6) family. In terms of tissue distribution, embryonic and larval tracheal system; dorsal trunk (but not at fusion with transverse connective), several branches and terminal cells. Also expressed in adult tracheal system; dorsal trunk, but not at the spiracles.

The protein resides in the membrane. Its function is as follows. Part of a complex that plays a role in tracheal liquid clearance. Probable role in sodium transport. In Drosophila melanogaster (Fruit fly), this protein is Sodium channel protein Nach (Nach).